A 122-amino-acid chain; its full sequence is Small ribosomal subunit protein bS6 (122 aa).

It belongs to the bacterial ribosomal protein bS6 family.

Its function is as follows. Binds together with bS18 to 16S ribosomal RNA. This chain is Small ribosomal subunit protein bS6, found in Methylibium petroleiphilum (strain ATCC BAA-1232 / LMG 22953 / PM1).